The following is a 362-amino-acid chain: Spermidine/putrescine import ATP-binding protein PotA (362 aa).

Positions 4-235 (IKLDHITKQY…PVNDFVARFI (232 aa)) constitute an ABC transporter domain. 37 to 44 (GPSGSGKT) is an ATP binding site.

It belongs to the ABC transporter superfamily. Spermidine/putrescine importer (TC 3.A.1.11.1) family. The complex is composed of two ATP-binding proteins (PotA), two transmembrane proteins (PotB and PotC) and a solute-binding protein (PotD).

The protein localises to the cell membrane. It catalyses the reaction ATP + H2O + polyamine-[polyamine-binding protein]Side 1 = ADP + phosphate + polyamineSide 2 + [polyamine-binding protein]Side 1.. Part of the ABC transporter complex PotABCD involved in spermidine/putrescine import. Responsible for energy coupling to the transport system. This chain is Spermidine/putrescine import ATP-binding protein PotA, found in Lactobacillus delbrueckii subsp. bulgaricus (strain ATCC 11842 / DSM 20081 / BCRC 10696 / JCM 1002 / NBRC 13953 / NCIMB 11778 / NCTC 12712 / WDCM 00102 / Lb 14).